A 557-amino-acid chain; its full sequence is Potassium-transporting ATPase potassium-binding subunit (557 aa).

12 consecutive transmembrane segments (helical) span residues 5 to 25 (GFLL…PLGS), 63 to 83 (LSAI…MLLG), 132 to 152 (GLTV…FALI), 170 to 190 (LLRI…LFFI), 253 to 273 (FVQM…FGEV), 283 to 303 (LLWA…WAEV), 329 to 349 (VLVS…AVIA), 356 to 376 (ALGG…FGGV), 379 to 399 (GLYG…LMIG), 416 to 436 (LTAL…ALAM), 484 to 504 (LLAF…MAIA), and 526 to 546 (LFVG…FIPA).

It belongs to the KdpA family. As to quaternary structure, the system is composed of three essential subunits: KdpA, KdpB and KdpC.

Its subcellular location is the cell inner membrane. Functionally, part of the high-affinity ATP-driven potassium transport (or Kdp) system, which catalyzes the hydrolysis of ATP coupled with the electrogenic transport of potassium into the cytoplasm. This subunit binds the periplasmic potassium ions and delivers the ions to the membrane domain of KdpB through an intramembrane tunnel. The protein is Potassium-transporting ATPase potassium-binding subunit of Escherichia fergusonii (strain ATCC 35469 / DSM 13698 / CCUG 18766 / IAM 14443 / JCM 21226 / LMG 7866 / NBRC 102419 / NCTC 12128 / CDC 0568-73).